The sequence spans 328 residues: Arabinose 5-phosphate isomerase KdsD (328 aa).

The SIS domain occupies 42 to 184; the sequence is CEKMFWCKGK…AVALLKARGF (143 aa). Substrate contacts are provided by residues 75–76, histidine 82, histidine 88, 114–123, 148–150, threonine 222, and aspartate 275; these read GT, ALIPVLKRLH, and KVA. Histidine 82 provides a ligand contact to Zn(2+). The region spanning 210–268 is the CBS 1 domain; that stretch reads MHTGDEIPHVKKTASLRDALLEVTRKNLGMTVICDDNMMIEGIFTDGDLRRVFDMGVDV. One can recognise a CBS 2 domain in the interval 277–328; that stretch reads MTPGGIRVRPGILAVEALNLMQSRHITSVMVADGDHLLGVLHMHDLLRAGVV.

The protein belongs to the SIS family. GutQ/KpsF subfamily. As to quaternary structure, homotetramer.

The catalysed reaction is D-arabinose 5-phosphate = D-ribulose 5-phosphate. The protein operates within carbohydrate biosynthesis; 3-deoxy-D-manno-octulosonate biosynthesis; 3-deoxy-D-manno-octulosonate from D-ribulose 5-phosphate: step 1/3. Its pathway is bacterial outer membrane biogenesis; lipopolysaccharide biosynthesis. Its function is as follows. Involved in the biosynthesis of 3-deoxy-D-manno-octulosonate (KDO), a unique 8-carbon sugar component of lipopolysaccharides (LPSs). Catalyzes the reversible aldol-ketol isomerization between D-ribulose 5-phosphate (Ru5P) and D-arabinose 5-phosphate (A5P). In Shigella flexneri, this protein is Arabinose 5-phosphate isomerase KdsD (kdsD).